A 337-amino-acid polypeptide reads, in one-letter code: LIX1-like protein (337 aa).

Residues 1 to 55 (METMRAQRLQPGVGVGGRGTLRALRPGVTGAPTSAATPPVGPPPAPPPPAPPLPP) are disordered. The span at 26-38 (PGVTGAPTSAATP) shows a compositional bias: low complexity. Residues 39–55 (PVGPPPAPPPPAPPLPP) are compositionally biased toward pro residues.

Belongs to the LIX1 family.

This chain is LIX1-like protein (Lix1l), found in Mus musculus (Mouse).